The following is a 46-amino-acid chain: U2-plectoxin-Pt1a (46 aa).

Contains 4 disulfide bonds. Expressed by the venom gland.

The protein resides in the secreted. Its function is as follows. Potent toxin that may paralyze and/or kill insect pests such as H.virescens (lepidoptera), S.exigua (beet armyworm) and M.sexta (tobacco hornworm). The polypeptide is U2-plectoxin-Pt1a (Plectreurys tristis (Spider)).